The primary structure comprises 107 residues: UPF0145 protein CHY_0465 (107 aa).

This sequence belongs to the UPF0145 family.

This Carboxydothermus hydrogenoformans (strain ATCC BAA-161 / DSM 6008 / Z-2901) protein is UPF0145 protein CHY_0465.